The following is a 188-amino-acid chain: UPF0301 protein XCV3063 (188 aa).

It belongs to the UPF0301 (AlgH) family.

This chain is UPF0301 protein XCV3063, found in Xanthomonas euvesicatoria pv. vesicatoria (strain 85-10) (Xanthomonas campestris pv. vesicatoria).